The chain runs to 524 residues: MARARRTKRASVTDIYKGCKASGTCPPDVINKVEQNTLADKILKYGSVGVFFGGLGISTGKGTGGPTGYIPLGQGPGVRVGATPTVVRPGVIPEIIGPTELIPVDSVTPIDPAAPSIVTLTDSSAGADLLPGEVETIAEVHPVPIDNVELDTPLVSGDRHAILEVTDANPPFRRTVTRTQYHNPAFEIISESTPLIGESTPSDHVFVFEGSGGVQVGDANESIELDTFPSRYSFDIEEPTPPRRVSTPIERISQEFRTLRRALYNRRLTEQVQVRDPLFIRSPSRLVRFQFDNPVFDEEVTQIFERDVAAVEEPPDRDFLDIERLGRPILTETAEGRVRVSRLGQRASLSTRSGARVGARVHFFTDISTINAEEPIELELLGEHSGDSSVVQEPFESTILDVNIDNIPESLDTNIAETSVDYDSADLLLDNGVEDFSRSQLVIGPSDRSLPSITVPQFESPRETIVYIQDIEGNTVVYPKYEERPTIILPTPSGPAIIQSPTHSSFDYYLHPSLRRKKRKRKYL.

The short motif at 1-10 (MARARRTKRA) is the Nuclear localization signal element. A disulfide bridge connects residues Cys19 and Cys25. Positions 516 to 523 (RKKRKRKY) match the Nuclear localization signal motif.

Belongs to the papillomaviridae L2 protein family. In terms of assembly, interacts with major capsid protein L1. Interacts with E2; this interaction inhibits E2 transcriptional activity but not the DNA replication function E2. Interacts with host GADD45GIP1. Interacts with host HSPA8; this interaction is required for L2 nuclear translocation. Interacts with host importins KPNB2 and KPNB3. Forms a complex with importin alpha2-beta1 heterodimers via interaction with the importin alpha2 adapter. Interacts with host DYNLT1; this interaction is essential for virus intracellular transport during entry. Interacts (via C-terminus) with host retromer subunits VPS35 and VPS29. Highly phosphorylated.

The protein resides in the virion. It is found in the host nucleus. It localises to the host early endosome. Its subcellular location is the host Golgi apparatus. Functionally, minor protein of the capsid that localizes along the inner surface of the virion, within the central cavities beneath the L1 pentamers. Plays a role in capsid stabilization through interaction with the major capsid protein L1. Once the virion enters the host cell, L2 escorts the genomic DNA into the nucleus by promoting escape from the endosomal compartments and traffic through the host Golgi network. Mechanistically, the C-terminus of L2 possesses a cell-penetrating peptide that protudes from the host endosome, interacts with host cytoplasmic retromer cargo and thereby mediates the capsid delivery to the host trans-Golgi network. Plays a role through its interaction with host dynein in the intracellular microtubule-dependent transport of viral capsid toward the nucleus. Mediates the viral genome import into the nucleus through binding to host importins. Once within the nucleus, L2 localizes viral genomes to host PML bodies in order to activate early gene expression for establishment of infection. Later on, promotes late gene expression by interacting with the viral E2 protein and by inhibiting its transcriptional activation functions. During virion assembly, encapsidates the genome by direct interaction with the viral DNA. The polypeptide is Minor capsid protein L2 (Human papillomavirus 22).